A 304-amino-acid polypeptide reads, in one-letter code: Methionyl-tRNA formyltransferase (304 aa).

(6S)-5,6,7,8-tetrahydrofolate is bound at residue 107–110 (SLLP).

This sequence belongs to the Fmt family.

It catalyses the reaction L-methionyl-tRNA(fMet) + (6R)-10-formyltetrahydrofolate = N-formyl-L-methionyl-tRNA(fMet) + (6S)-5,6,7,8-tetrahydrofolate + H(+). In terms of biological role, attaches a formyl group to the free amino group of methionyl-tRNA(fMet). The formyl group appears to play a dual role in the initiator identity of N-formylmethionyl-tRNA by promoting its recognition by IF2 and preventing the misappropriation of this tRNA by the elongation apparatus. The protein is Methionyl-tRNA formyltransferase of Coprothermobacter proteolyticus (strain ATCC 35245 / DSM 5265 / OCM 4 / BT).